A 616-amino-acid polypeptide reads, in one-letter code: MRLLPSSCAGALSLLCSLAIAAPTELKARDLSSFIASERAIALQGALNNIGPDGSAVPGAGAGFVVASPSKANPDYFYTWSRDSALTLKMIIDEFILGNTTLQTIIEQYIHAQAVLQTVSNPSGTFLPDGVGLGEPKFMVDGTRFNGPWGRPQRDGPALRAIALMTYSNWLIKNGQFAEAKTKIWPIIANDLSYVGQYWNQSGFDLWEETYASSFFTIQNQHRALVEGAQLAHDLGVTCTGCDQAPEVLCFLQSFWNGKYIVSNINVNNGRTGLDGNSILGAISTFDIDAYCDSPTLQPCHSQSLANFKVLTDTFRNLYTINAGIPEGQGVAVGRYAEDVYMGGNPWYLITTAAAEFLYDAVAQWKARHVLTVDETSLAFFKDIYPEVTVREYKSGNANSPFAQIMDAVTAYADSYVAIAEKYIPSNGSLSEQFNRDTGTPLSAIDLTWSYAAFITMSQRRAGQYPSSWGSRNALPPPTTCSASSTPGIYTPATAAGAPNVTSSCQVSITFNINATTYYGENLYVIGNSSDLGAWNIADAYPLSASAYTQDRPLWSAAIPLNAGEVISYQYVRQEDCDQPYIYETVNRTLTVPACGGAAVTTDDAWMGPVGSSGNC.

A signal peptide spans Met-1 to Arg-29. Residue Trp-149 coordinates substrate. Residue Asn-200 is glycosylated (N-linked (GlcNAc...) asparagine). Asp-205 acts as the Proton acceptor in catalysis. The active-site Proton donor is the Glu-208. The N-linked (GlcNAc...) asparagine glycan is linked to Asn-427. In terms of domain architecture, CBM20 spans Val-501–Gly-608.

It belongs to the glycosyl hydrolase 15 family.

It is found in the secreted. The catalysed reaction is Hydrolysis of terminal (1-&gt;4)-linked alpha-D-glucose residues successively from non-reducing ends of the chains with release of beta-D-glucose.. The polypeptide is Glucoamylase P (GAMP) (Amorphotheca resinae (Creosote fungus)).